The following is a 248-amino-acid chain: Ubiquinone/menaquinone biosynthesis C-methyltransferase UbiE (248 aa).

Residues Ser-68, Asp-92, and 120–121 each bind S-adenosyl-L-methionine; that span reads NA.

The protein belongs to the class I-like SAM-binding methyltransferase superfamily. MenG/UbiE family.

It catalyses the reaction a 2-demethylmenaquinol + S-adenosyl-L-methionine = a menaquinol + S-adenosyl-L-homocysteine + H(+). The enzyme catalyses a 2-methoxy-6-(all-trans-polyprenyl)benzene-1,4-diol + S-adenosyl-L-methionine = a 5-methoxy-2-methyl-3-(all-trans-polyprenyl)benzene-1,4-diol + S-adenosyl-L-homocysteine + H(+). Its pathway is quinol/quinone metabolism; menaquinone biosynthesis; menaquinol from 1,4-dihydroxy-2-naphthoate: step 2/2. It functions in the pathway cofactor biosynthesis; ubiquinone biosynthesis. Functionally, methyltransferase required for the conversion of demethylmenaquinol (DMKH2) to menaquinol (MKH2) and the conversion of 2-polyprenyl-6-methoxy-1,4-benzoquinol (DDMQH2) to 2-polyprenyl-3-methyl-6-methoxy-1,4-benzoquinol (DMQH2). This is Ubiquinone/menaquinone biosynthesis C-methyltransferase UbiE from Rickettsia typhi (strain ATCC VR-144 / Wilmington).